We begin with the raw amino-acid sequence, 360 residues long: Inward rectifier potassium channel 13 (360 aa).

Over 1 to 50 (MDGSHCKVIAPLLTERHQRMVTKDGHSTLQMDGAQTGLAYLRDAWGILMD) the chain is Cytoplasmic. The helical transmembrane segment at 51–77 (MRWRWMMLVFSASFVIHWLVFAVLWYI) threads the bilayer. Residues 78–105 (LAEMNGDLGLDHDAPPENHTICVKYITS) are Extracellular-facing. The segment at residues 106-122 (FTAAFSFSLETQLTIGY) is an intramembrane region (helical; Pore-forming). The Selectivity filter motif lies at 119–124 (TIGYGT). The Extracellular portion of the chain corresponds to 123–131 (GTMFPSGDC). A helical transmembrane segment spans residues 132–157 (PSAIALLAIQMLLGLMLEAFITGAFV). Topologically, residues 158 to 360 (AKIARPKNRA…FQISETGLTE (203 aa)) are cytoplasmic. Phosphoserine is present on Ser287.

This sequence belongs to the inward rectifier-type potassium channel (TC 1.A.2.1) family. In terms of assembly, homotetramer. Interacts with RAB28; the interaction may facilitate cone outer segments phagocytosis. Post-translationally, phosphorylation at Ser-287 by PKA increases them.

Its subcellular location is the membrane. It is found in the cell membrane. The enzyme catalyses K(+)(in) = K(+)(out). Its activity is regulated as follows. Inhibited by Ba(2+) and Cs(+), although sensitivity to those inhibitors is much lower than in other Kir channels. Functionally, inward rectifier potassium channels are characterized by a greater tendency to allow potassium to flow into the cell rather than out of it. Their voltage dependence is regulated by the concentration of extracellular potassium; as external potassium is raised, the voltage range of the channel opening shifts to more positive voltages. The inward rectification is mainly due to the blockage of outward current by internal magnesium. KCNJ13 has a very low single channel conductance, low sensitivity to block by external barium and cesium, and no dependence of its inward rectification properties on the internal blocking particle magnesium. The polypeptide is Inward rectifier potassium channel 13 (KCNJ13) (Bos taurus (Bovine)).